The following is a 607-amino-acid chain: Elongation factor 4 (607 aa).

In terms of domain architecture, tr-type G spans 11 to 193 (ENIRNFSIIA…KIVEVVPAPD (183 aa)). GTP is bound by residues 23 to 28 (DHGKST) and 140 to 143 (NKID).

The protein belongs to the TRAFAC class translation factor GTPase superfamily. Classic translation factor GTPase family. LepA subfamily.

The protein resides in the cell membrane. The enzyme catalyses GTP + H2O = GDP + phosphate + H(+). Functionally, required for accurate and efficient protein synthesis under certain stress conditions. May act as a fidelity factor of the translation reaction, by catalyzing a one-codon backward translocation of tRNAs on improperly translocated ribosomes. Back-translocation proceeds from a post-translocation (POST) complex to a pre-translocation (PRE) complex, thus giving elongation factor G a second chance to translocate the tRNAs correctly. Binds to ribosomes in a GTP-dependent manner. The sequence is that of Elongation factor 4 from Staphylococcus aureus (strain USA300).